A 79-amino-acid polypeptide reads, in one-letter code: ATP synthase subunit 9, mitochondrial (79 aa).

The next 2 membrane-spanning stretches (helical) occupy residues 21–41 and 59–79; these read SGLIGAGAGVGIVFGCLILAF and FALTEAIGLLALVMAFLILFI.

This sequence belongs to the ATPase C chain family. In terms of assembly, F-type ATPases have 2 components, CF(1) - the catalytic core - and CF(0) - the membrane proton channel. CF(1) has five subunits: alpha(3), beta(3), gamma(1), delta(1), epsilon(1). CF(0) has three main subunits: a, b and c.

Its subcellular location is the mitochondrion membrane. Functionally, mitochondrial membrane ATP synthase (F(1)F(0) ATP synthase or Complex V) produces ATP from ADP in the presence of a proton gradient across the membrane which is generated by electron transport complexes of the respiratory chain. F-type ATPases consist of two structural domains, F(1) - containing the extramembraneous catalytic core and F(0) - containing the membrane proton channel, linked together by a central stalk and a peripheral stalk. During catalysis, ATP synthesis in the catalytic domain of F(1) is coupled via a rotary mechanism of the central stalk subunits to proton translocation. Part of the complex F(0) domain. A homomeric c-ring of probably 10 subunits is part of the complex rotary element. In Acanthamoeba castellanii (Amoeba), this protein is ATP synthase subunit 9, mitochondrial (ATP9).